Consider the following 211-residue polypeptide: Probable GTP-binding protein EngB (211 aa).

The region spanning 21-197 (TAPEFAFLGR…WGEIHRVAAE (177 aa)) is the EngB-type G domain. GTP-binding positions include 29-36 (GRSNVGKS), 55-59 (GRTRA), 80-83 (DLPG), 147-150 (TKAD), and 176-178 (CSA). Residues Ser36 and Thr57 each contribute to the Mg(2+) site.

The protein belongs to the TRAFAC class TrmE-Era-EngA-EngB-Septin-like GTPase superfamily. EngB GTPase family. It depends on Mg(2+) as a cofactor.

Its function is as follows. Necessary for normal cell division and for the maintenance of normal septation. The sequence is that of Probable GTP-binding protein EngB from Acidobacterium capsulatum (strain ATCC 51196 / DSM 11244 / BCRC 80197 / JCM 7670 / NBRC 15755 / NCIMB 13165 / 161).